Reading from the N-terminus, the 488-residue chain is N-succinylglutamate 5-semialdehyde dehydrogenase (488 aa).

221–226 is a binding site for NAD(+); it reads GSSRTG. Active-site residues include Glu244 and Cys278.

This sequence belongs to the aldehyde dehydrogenase family. AstD subfamily.

It carries out the reaction N-succinyl-L-glutamate 5-semialdehyde + NAD(+) + H2O = N-succinyl-L-glutamate + NADH + 2 H(+). Its pathway is amino-acid degradation; L-arginine degradation via AST pathway; L-glutamate and succinate from L-arginine: step 4/5. Catalyzes the NAD-dependent reduction of succinylglutamate semialdehyde into succinylglutamate. The chain is N-succinylglutamate 5-semialdehyde dehydrogenase from Pseudomonas savastanoi pv. phaseolicola (strain 1448A / Race 6) (Pseudomonas syringae pv. phaseolicola (strain 1448A / Race 6)).